Consider the following 249-residue polypeptide: Glucosamine-6-phosphate deaminase (249 aa).

Asp67 acts as the Proton acceptor; for enolization step in catalysis. Asn136 acts as the For ring-opening step in catalysis. Catalysis depends on His138, which acts as the Proton acceptor; for ring-opening step. The active-site For ring-opening step is Glu143.

Belongs to the glucosamine/galactosamine-6-phosphate isomerase family. NagB subfamily.

The catalysed reaction is alpha-D-glucosamine 6-phosphate + H2O = beta-D-fructose 6-phosphate + NH4(+). It participates in amino-sugar metabolism; N-acetylneuraminate degradation; D-fructose 6-phosphate from N-acetylneuraminate: step 5/5. Catalyzes the reversible isomerization-deamination of glucosamine 6-phosphate (GlcN6P) to form fructose 6-phosphate (Fru6P) and ammonium ion. The protein is Glucosamine-6-phosphate deaminase of Clostridium botulinum (strain Alaska E43 / Type E3).